The chain runs to 515 residues: 1-pyrroline-5-carboxylate dehydrogenase 2 (515 aa).

Catalysis depends on residues Glu-286 and Cys-320.

This sequence belongs to the aldehyde dehydrogenase family. RocA subfamily.

It carries out the reaction L-glutamate 5-semialdehyde + NAD(+) + H2O = L-glutamate + NADH + 2 H(+). It participates in amino-acid degradation; L-proline degradation into L-glutamate; L-glutamate from L-proline: step 2/2. In Halalkalibacterium halodurans (strain ATCC BAA-125 / DSM 18197 / FERM 7344 / JCM 9153 / C-125) (Bacillus halodurans), this protein is 1-pyrroline-5-carboxylate dehydrogenase 2 (rocA2).